Reading from the N-terminus, the 417-residue chain is E3 ubiquitin-protein ligase RNF135 (417 aa).

The segment at 21 to 67 (CIICQGLLDQPTTLPCGHSFCLRCLHDLWVSKRGAVDGCPWACPICR) adopts an RING-type zinc-finger fold. Disordered regions lie at residues 95 to 118 (EVEAGSEPEPAPAPRSAPQVTVQK) and 143 to 173 (TQRPNLGSGQDNAQGTPPTDSSSEGEHSLDS). 2 coiled-coil regions span residues 121–145 (TNVIQELTDMVRQLVDDVKSLQTQR) and 180–204 (SISQKKIQEILHNLEEIQEKLQGSV). The span at 143 to 164 (TQRPNLGSGQDNAQGTPPTDSS) shows a compositional bias: polar residues. One can recognise a B30.2/SPRY domain in the interval 225 to 417 (PDQRRPAPRK…NYLEIKQLNT (193 aa)).

As to quaternary structure, homodimer. Interacts (homodimer) with RIGI (double-stranded RNA-bound oligomeric form); involved in both RIGI ubiquitination, oligomerization into filaments associated with viral RNAs and the bridging of these filaments. Interacts with UBE2D3 and UBE2N; E2 ubiquitin ligases involved in RNF135-mediated ubiquitination of RIGI and activation of the RIG-I signaling pathway. Interacts with PCBP2. As to expression, ubiquitously expressed.

It localises to the cytoplasm. The protein resides in the stress granule. It catalyses the reaction S-ubiquitinyl-[E2 ubiquitin-conjugating enzyme]-L-cysteine + [acceptor protein]-L-lysine = [E2 ubiquitin-conjugating enzyme]-L-cysteine + N(6)-ubiquitinyl-[acceptor protein]-L-lysine.. Its pathway is protein modification; protein ubiquitination. Its function is as follows. E2-dependent E3 ubiquitin-protein ligase that functions as a RIGI coreceptor in the sensing of viral RNAs in cell cytoplasm and the activation of the antiviral innate immune response. Together with the UBE2D3, UBE2N and UB2V1 E2 ligases, catalyzes the 'Lys-63'-linked polyubiquitination of RIGI oligomerized on viral RNAs, an essential step in the activation of the RIG-I signaling pathway. Through a ubiquitin-independent parallel mechanism, which consists in bridging RIGI filaments forming on longer viral RNAs, further activates the RIG-I signaling pathway. This second mechanism that synergizes with the ubiquitin-dependent one would thereby allow an RNA length-dependent regulation of the RIG-I signaling pathway. Associated with the E2 ligase UBE2N, also constitutively synthesizes unanchored 'Lys-63'-linked polyubiquitin chains that may also activate the RIG-I signaling pathway. It is not involved in the innate immune response against DNA viruses. The polypeptide is E3 ubiquitin-protein ligase RNF135 (Mus musculus (Mouse)).